Consider the following 170-residue polypeptide: Large ribosomal subunit protein uL10 (170 aa).

The protein belongs to the universal ribosomal protein uL10 family. As to quaternary structure, part of the ribosomal stalk of the 50S ribosomal subunit. The N-terminus interacts with L11 and the large rRNA to form the base of the stalk. The C-terminus forms an elongated spine to which L12 dimers bind in a sequential fashion forming a multimeric L10(L12)X complex.

In terms of biological role, forms part of the ribosomal stalk, playing a central role in the interaction of the ribosome with GTP-bound translation factors. This Nitratiruptor sp. (strain SB155-2) protein is Large ribosomal subunit protein uL10.